Consider the following 615-residue polypeptide: TANK-binding kinase 1-binding protein 1 (615 aa).

Positions 1-279 (MESMFEDDIS…QDLASNQSER (279 aa)) are homodimerization. A coiled-coil region spans residues 48-162 (YGDIKERLGG…ALVETHLRQI (115 aa)). Ser-184 carries the phosphoserine modification. The stretch at 221–276 (VSDLERRRLEEALEAAQGEARGAQLREEQLQAECERLQGELKQLQETRAQDLASNQ) forms a coiled coil. An interaction with TBK1 and IKBKE region spans residues 280 to 329 (DMAWVKRVGDDQVNLALAYTELTEELGRLRELSSLQGRILRTLLQEQARS). A disordered region spans residues 326 to 458 (QARSGGQRHS…SHHVKAGFQG (133 aa)). Pro residues predominate over residues 345–365 (PQCPSPSPPARAAPPCPPCQS). Phosphoserine occurs at positions 365, 372, 379, 385, 400, and 415. Positions 389–406 (PSCPSPVPQRRSPVPPSC) are enriched in pro residues. Residues 416 to 435 (PVPPSCPAPQPRPPPPPPPG) show a composition bias toward pro residues. Residues Ser-504 and Ser-534 each carry the phosphoserine modification. The segment at 583–609 (IRSCPLCQLGFPVGYPDDALIKHIDSH) adopts a UBZ1-type zinc-finger fold. Zn(2+)-binding residues include Cys-586, Cys-589, His-605, and His-609.

In terms of assembly, homodimer. May form a heterodimer with NAP1. Interacts with TKB1 and IKBKE. Weakly interacts with DDX3X. (Microbial infection) Interacts with vaccinia virus protein C6. Detected in leukocytes, lung, placenta, small intestine, liver, kidney, spleen, muscle, heart, brain and at low levels in thymus.

Its function is as follows. Adapter protein which constitutively binds TBK1 and IKBKE playing a role in antiviral innate immunity. The chain is TANK-binding kinase 1-binding protein 1 from Homo sapiens (Human).